A 151-amino-acid chain; its full sequence is Group 10 secretory phospholipase A2 (151 aa).

Positions Met1–Ser17 are cleaved as a signal peptide. The propeptide occupies Glu18–Arg28. Disulfide bonds link Cys39–Cys97, Cys53–Cys143, Cys55–Cys71, Cys70–Cys125, Cys76–Cys150, Cys77–Cys118, Cys86–Cys111, and Cys104–Cys116. The Ca(2+) site is built by Tyr54, Gly56, and Gly58. Residue His74 is part of the active site. Residue Asp75 participates in Ca(2+) binding. Asp119 is a catalytic residue.

Belongs to the phospholipase A2 family. As to quaternary structure, interacts with PLA2R1; this interaction mediates PLA2G10 clearance and inactivation. The cofactor is Ca(2+).

The protein localises to the secreted. It localises to the lysosome. The protein resides in the cytoplasmic vesicle. Its subcellular location is the secretory vesicle. It is found in the acrosome. It carries out the reaction a 1,2-diacyl-sn-glycero-3-phosphocholine + H2O = a 1-acyl-sn-glycero-3-phosphocholine + a fatty acid + H(+). The catalysed reaction is 1-hexadecanoyl-2-(9Z-octadecenoyl)-sn-glycero-3-phosphocholine + H2O = 1-hexadecanoyl-sn-glycero-3-phosphocholine + (9Z)-octadecenoate + H(+). It catalyses the reaction 1-octadecanoyl-2-(5Z,8Z,11Z,14Z-eicosatetraenoyl)-sn-glycero-3-phosphocholine + H2O = 1-octadecanoyl-sn-glycero-3-phosphocholine + (5Z,8Z,11Z,14Z)-eicosatetraenoate + H(+). The enzyme catalyses 1,2-dihexadecanoyl-sn-glycero-3-phosphocholine + H2O = 1-hexadecanoyl-sn-glycero-3-phosphocholine + hexadecanoate + H(+). It carries out the reaction 1-hexadecanoyl-2-(9Z-octadecenoyl)-sn-glycero-3-phosphoglycerol + H2O = 1-hexadecanoyl-sn-glycero-3-phosphoglycerol + (9Z)-octadecenoate + H(+). The catalysed reaction is 1,2-dihexadecanoyl-sn-glycero-3-phospho-(1'-sn-glycerol) + H2O = 1-hexadecanoyl-sn-glycero-3-phospho-(1'-sn-glycerol) + hexadecanoate + H(+). It catalyses the reaction 1-hexadecanoyl-2-(9Z-octadecenoyl)-sn-glycero-3-phospho-L-serine + H2O = 1-hexadecanoyl-sn-glycero-3-phospho-L-serine + (9Z)-octadecenoate + H(+). The enzyme catalyses 1-hexadecanoyl-2-(9Z,12Z-octadecadienoyl)-sn-glycero-3-phosphoethanolamine + H2O = 1-hexadecanoyl-sn-glycero-3-phosphoethanolamine + (9Z,12Z)-octadecadienoate + H(+). It carries out the reaction 1-hexadecanoyl-2-(9Z-octadecenoyl)-sn-glycero-3-phosphate + H2O = 1-hexadecanoyl-sn-glycero-3-phosphate + (9Z)-octadecenoate + H(+). The catalysed reaction is 1-O-hexadecyl-2-acetyl-sn-glycero-3-phosphocholine + H2O = 1-O-hexadecyl-sn-glycero-3-phosphocholine + acetate + H(+). Its function is as follows. Secretory calcium-dependent phospholipase A2 that primarily targets extracellular phospholipids. Hydrolyzes the ester bond of the fatty acyl group attached at sn-2 position of phospholipids with preference for phosphatidylcholines and phosphatidylglycerols over phosphatidylethanolamines. Preferentially releases sn-2 omega-6 and omega-3 polyunsaturated fatty acyl (PUFA) chains over saturated fatty acyls. Contributes to phospholipid remodeling of very low-density lipoprotein (VLDL), low-density lipoprotein (LDL) and high-density lipoprotein (HDL) particles. Hydrolyzes LDL phospholipids releasing unsaturated fatty acids that regulate macrophage differentiation toward foam cells. Efficiently hydrolyzes and inactivates platelet activating factor (PAF), a potent lipid mediator present in oxidized LDL. May act in an autocrine and paracrine manner. Secreted by lung epithelium, targets membrane phospholipids of infiltrating eosinophils, releasing arachidonate and boosting eicosanoid and cysteinyl leukotriene synthesis involved in airway inflammatory response. Secreted by gut epithelium, hydrolyzes dietary and biliary phosphatidylcholines in the gastrointestinal lumen. Plays a stem cell regulator role in colon epithelium. Within intracellular compartment, mediates Paneth-like cell differentiation and its stem cell supporting functions by inhibiting the Wnt signaling pathway in intestinal stem cell (ISC). Secreted in the intestinal lumen upon inflammation, acts in an autocrine way and promotes prostaglandin E2 synthesis that stimulates Wnt signaling pathway in ISCs and tissue regeneration. May participate in hair follicle morphogenesis by regulating phosphatidylethanolamines metabolism at the outermost epithelial layer and facilitating melanin synthesis. By releasing lysophosphatidylcholines (LPCs) at sperm acrosome, controls sperm cell capacitation, acrosome reaction and overall fertility. May promote neurite outgrowth in neuron fibers involved in nociception. Contributes to lipid remodeling of cellular membranes and generation of lipid mediators involved in pathogen clearance. Cleaves sn-2 fatty acyl chains of phosphatidylglycerols and phosphatidylethanolamines, which are major components of membrane phospholipids in bacteria. Displays bactericidal activity against Gram-positive bacteria by directly hydrolyzing phospholipids of the bacterial membrane. In pulmonary epithelium, may contribute to host defense response against adenoviral infection. Prevents adenovirus entry into host cells by hydrolyzing host cell plasma membrane, releasing C16:0 LPCs that inhibit virus-mediated membrane fusion and viral infection. Likely prevents adenoviral entry into the endosomes of host cells. May play a role in maturation and activation of innate immune cells including macrophages, group 2 innate lymphoid cells and mast cells. The polypeptide is Group 10 secretory phospholipase A2 (Pla2g10) (Rattus norvegicus (Rat)).